Reading from the N-terminus, the 360-residue chain is Lipid-A-disaccharide synthase (360 aa).

Belongs to the LpxB family.

The catalysed reaction is a lipid X + a UDP-2-N,3-O-bis[(3R)-3-hydroxyacyl]-alpha-D-glucosamine = a lipid A disaccharide + UDP + H(+). It functions in the pathway bacterial outer membrane biogenesis; LPS lipid A biosynthesis. Its function is as follows. Condensation of UDP-2,3-diacylglucosamine and 2,3-diacylglucosamine-1-phosphate to form lipid A disaccharide, a precursor of lipid A, a phosphorylated glycolipid that anchors the lipopolysaccharide to the outer membrane of the cell. This is Lipid-A-disaccharide synthase from Helicobacter pylori (strain P12).